The following is a 147-amino-acid chain: Small ribosomal subunit protein bS6m (147 aa).

Belongs to the bacterial ribosomal protein bS6 family. Component of the mitochondrial ribosome small subunit (28S) which comprises a 12S rRNA and about 30 distinct proteins.

The protein resides in the mitochondrion. The protein is Small ribosomal subunit protein bS6m (mRpS6) of Drosophila melanogaster (Fruit fly).